Reading from the N-terminus, the 448-residue chain is Protease Do-like 8, chloroplastic (448 aa).

A serine protease region spans residues 152-333 (EGNGSGVVWD…IPSSTVLKIV (182 aa)). Residues His171, Asp214, and Ser292 each act as charge relay system in the active site. A PDZ domain is found at 336-433 (LIQFSKVLRA…DKVTLKIKRG (98 aa)).

This sequence belongs to the peptidase S1C family.

It is found in the plastid. The protein localises to the chloroplast thylakoid lumen. Functionally, probable serine protease. The sequence is that of Protease Do-like 8, chloroplastic (DEGP8) from Arabidopsis thaliana (Mouse-ear cress).